The chain runs to 393 residues: Major outer membrane porin, serovar D (393 aa).

A signal peptide spans 1–22; the sequence is MKKLLKSVLVFAALSSASSLQA.

Belongs to the chlamydial porin (CP) (TC 1.B.2) family. In terms of assembly, part of a disulfide cross-linked outer membrane complex (COMC) composed of the major outer membrane porin (MOMP), the small cysteine-rich protein (OmcA) and the large cysteine-rich periplasmic protein (OmcB).

The protein localises to the cell outer membrane. Its function is as follows. In elementary bodies (EBs, the infectious stage, which is able to survive outside the host cell) provides the structural integrity of the outer envelope through disulfide cross-links with the small cysteine-rich protein and the large cysteine-rich periplasmic protein. It has been described in publications as the Sarkosyl-insoluble COMC (Chlamydia outer membrane complex), and serves as the functional equivalent of peptidoglycan. Functionally, permits diffusion of specific solutes through the outer membrane. The polypeptide is Major outer membrane porin, serovar D (ompA) (Chlamydia trachomatis serovar D (strain ATCC VR-885 / DSM 19411 / UW-3/Cx)).